A 312-amino-acid polypeptide reads, in one-letter code: Pre-mRNA-splicing factor 38A (312 aa).

The segment at 1–179 (MANRTVKDAH…VLEETEQLDP (179 aa)) is N-terminal protein interaction domain. Residues 180–312 (RVSALEEDMD…SHKKSRRGNE (133 aa)) are disordered. The segment covering 184 to 201 (LEEDMDDVESSEEEEDDD) has biased composition (acidic residues). A compositionally biased stretch (basic and acidic residues) spans 202 to 223 (EKGRDPSPEHHRRNYRDLDRPR). Composition is skewed to basic residues over residues 224 to 294 (RSPS…RSHS) and 301 to 312 (KKSHKKSRRGNE).

This sequence belongs to the PRP38 family. As to quaternary structure, component of the spliceosome B complex.

It is found in the nucleus. Functionally, involved in pre-mRNA splicing as a component of the spliceosome. The sequence is that of Pre-mRNA-splicing factor 38A (prpf38a) from Xenopus laevis (African clawed frog).